The following is a 1050-amino-acid chain: Calmodulin-binding transcription activator 2 (1050 aa).

The CG-1 DNA-binding region spans 15–141 (IKQLLSEAQH…YLEVKGNRMS (127 aa)). 2 stretches are compositionally biased toward polar residues: residues 141–171 (STSG…SSIL) and 183–196 (SRQA…NPEP). 2 disordered regions span residues 141–196 (STSG…NPEP) and 223–246 (NRDG…SGDV). ANK repeat units follow at residues 661–690 (DGQG…SINF) and 694–723 (NGWS…DAGA). 2 consecutive IQ domains span residues 870 to 899 (VHAA…RIVK) and 893 to 922 (IRQR…SVGL). The calmodulin-binding stretch occupies residues 918–940 (WSVGLLEKIILRWRRKGSGLRGF). Residues 957–985 (QEDDYDFLKEGRKQTEERLQKALTRVKSM) are a coiled coil. A Phosphoserine modification is found at Ser-984.

Belongs to the CAMTA family. In terms of tissue distribution, expressed in roots, stems, old leaves, petals, sepals, top of carpels, stigmas, stamen filaments, anthers and siliques, but not in pollen.

The protein localises to the nucleus. Transcription activator that binds to the DNA consensus sequence 5'-[ACG]CGCG[GTC]-3'. Regulates transcriptional activity in response to calcium signals. Binds calmodulin in a calcium-dependent manner. Involved in freezing tolerance in association with CAMTA1 and CAMTA3. Contributes together with CAMTA1 and CAMTA3 to the positive regulation of the cold-induced expression of DREB1A/CBF3, DREB1B/CBF1 and DREB1C/CBF2. Involved together with CAMTA3 and CAMTA4 in the positive regulation of a general stress response. Involved in tolerance to aluminum. Binds to the promoter of ALMT1 transporter and contributes to the positive regulation of aluminum-induced expression of ALMT1. This Arabidopsis thaliana (Mouse-ear cress) protein is Calmodulin-binding transcription activator 2.